The following is a 155-amino-acid chain: Transcriptional regulator MraZ (155 aa).

2 consecutive SpoVT-AbrB domains span residues Arg-7 to Val-63 and Leu-92 to Arg-135.

This sequence belongs to the MraZ family. In terms of assembly, forms oligomers.

The protein localises to the cytoplasm. Its subcellular location is the nucleoid. This is Transcriptional regulator MraZ from Chlorobaculum tepidum (strain ATCC 49652 / DSM 12025 / NBRC 103806 / TLS) (Chlorobium tepidum).